The primary structure comprises 566 residues: Endoglucanase G (566 aa).

Residues 1–30 (MKKAKAIFSLVVALMVLAIFCFAQNTGSTA) form the signal peptide. Glu-226 acts as the Proton donor in catalysis. Glu-381 acts as the Nucleophile in catalysis. The tract at residues 473-494 (GTPQASDPPATPTATPTKPAAS) is disordered. Residues 474 to 494 (TPQASDPPATPTATPTKPAAS) are compositionally biased toward low complexity. The 68-residue stretch at 497–564 (PSFIYGDINS…LLRSIDKLPH (68 aa)) folds into the Dockerin domain.

The protein belongs to the glycosyl hydrolase 5 (cellulase A) family.

The catalysed reaction is Endohydrolysis of (1-&gt;4)-beta-D-glucosidic linkages in cellulose, lichenin and cereal beta-D-glucans.. Its function is as follows. This enzyme catalyzes the endohydrolysis of 1,4-beta-glucosidic linkages in cellulose, lichenin and cereal beta-D-glucans. The chain is Endoglucanase G (celG) from Acetivibrio thermocellus (strain ATCC 27405 / DSM 1237 / JCM 9322 / NBRC 103400 / NCIMB 10682 / NRRL B-4536 / VPI 7372) (Clostridium thermocellum).